Consider the following 134-residue polypeptide: Profilin-4 (134 aa).

Residues Cys-13 and Cys-118 are joined by a disulfide bond. The Involved in PIP2 interaction motif lies at 84–100; the sequence is AVIRGKKGSGGITIKKT. Position 114 is a phosphothreonine (Thr-114).

It belongs to the profilin family. Occurs in many kinds of cells as a complex with monomeric actin in a 1:1 ratio. Post-translationally, phosphorylated by MAP kinases.

It localises to the cytoplasm. The protein resides in the cytoskeleton. Its function is as follows. Binds to actin and affects the structure of the cytoskeleton. At high concentrations, profilin prevents the polymerization of actin, whereas it enhances it at low concentrations. The polypeptide is Profilin-4 (Olea europaea (Common olive)).